The following is a 501-amino-acid chain: Cytochrome P450 71B23 (501 aa).

A helical transmembrane segment spans residues 1–21; the sequence is MSIFLCFLLLLLLLLVTIIFT. Position 443 (cysteine 443) interacts with heme.

This sequence belongs to the cytochrome P450 family. Requires heme as cofactor.

It localises to the membrane. This chain is Cytochrome P450 71B23 (CYP71B23), found in Arabidopsis thaliana (Mouse-ear cress).